A 419-amino-acid chain; its full sequence is L-rhamnose isomerase (419 aa).

3 residues coordinate Mn(2+): His-262, Asp-294, and Asp-296.

Belongs to the rhamnose isomerase family. In terms of assembly, homotetramer. The cofactor is Mn(2+).

It localises to the cytoplasm. The catalysed reaction is L-rhamnopyranose = L-rhamnulose. It functions in the pathway carbohydrate degradation; L-rhamnose degradation; glycerone phosphate from L-rhamnose: step 1/3. Its function is as follows. Catalyzes the interconversion of L-rhamnose and L-rhamnulose. The protein is L-rhamnose isomerase of Escherichia coli (strain 55989 / EAEC).